A 384-amino-acid chain; its full sequence is Galactokinase (384 aa).

34–37 provides a ligand contact to substrate; it reads EHTD. 123-129 serves as a coordination point for ATP; sequence SSGLSSS. Positions 129 and 161 each coordinate Mg(2+). The Proton acceptor role is filled by aspartate 173. Tyrosine 222 lines the substrate pocket.

This sequence belongs to the GHMP kinase family. GalK subfamily.

The protein localises to the cytoplasm. It catalyses the reaction alpha-D-galactose + ATP = alpha-D-galactose 1-phosphate + ADP + H(+). Its pathway is carbohydrate metabolism; galactose metabolism. Catalyzes the transfer of the gamma-phosphate of ATP to D-galactose to form alpha-D-galactose-1-phosphate (Gal-1-P). This chain is Galactokinase, found in Haemophilus influenzae (strain PittGG).